Consider the following 252-residue polypeptide: 5'-nucleotidase SurE (252 aa).

A divalent metal cation-binding residues include D8, D9, S39, and N95.

The protein belongs to the SurE nucleotidase family. A divalent metal cation serves as cofactor.

The protein localises to the cytoplasm. The catalysed reaction is a ribonucleoside 5'-phosphate + H2O = a ribonucleoside + phosphate. Functionally, nucleotidase that shows phosphatase activity on nucleoside 5'-monophosphates. This is 5'-nucleotidase SurE from Clostridium botulinum (strain Loch Maree / Type A3).